The sequence spans 383 residues: Succinyl-diaminopimelate desuccinylase (383 aa).

Histidine 74 provides a ligand contact to Zn(2+). Aspartate 76 is a catalytic residue. Aspartate 107 contributes to the Zn(2+) binding site. Glutamate 141 acts as the Proton acceptor in catalysis. Positions 142, 170, and 356 each coordinate Zn(2+).

Belongs to the peptidase M20A family. DapE subfamily. As to quaternary structure, homodimer. Zn(2+) serves as cofactor. It depends on Co(2+) as a cofactor.

It catalyses the reaction N-succinyl-(2S,6S)-2,6-diaminopimelate + H2O = (2S,6S)-2,6-diaminopimelate + succinate. It functions in the pathway amino-acid biosynthesis; L-lysine biosynthesis via DAP pathway; LL-2,6-diaminopimelate from (S)-tetrahydrodipicolinate (succinylase route): step 3/3. Functionally, catalyzes the hydrolysis of N-succinyl-L,L-diaminopimelic acid (SDAP), forming succinate and LL-2,6-diaminopimelate (DAP), an intermediate involved in the bacterial biosynthesis of lysine and meso-diaminopimelic acid, an essential component of bacterial cell walls. The protein is Succinyl-diaminopimelate desuccinylase of Polynucleobacter necessarius subsp. necessarius (strain STIR1).